A 206-amino-acid chain; its full sequence is Small ribosomal subunit protein uS4 (206 aa).

Positions 96-158 (SRLDNVVYRM…AKKQLRIQNA (63 aa)) constitute an S4 RNA-binding domain.

It belongs to the universal ribosomal protein uS4 family. In terms of assembly, part of the 30S ribosomal subunit. Contacts protein S5. The interaction surface between S4 and S5 is involved in control of translational fidelity.

Its function is as follows. One of the primary rRNA binding proteins, it binds directly to 16S rRNA where it nucleates assembly of the body of the 30S subunit. In terms of biological role, with S5 and S12 plays an important role in translational accuracy. This chain is Small ribosomal subunit protein uS4, found in Francisella tularensis subsp. mediasiatica (strain FSC147).